Consider the following 518-residue polypeptide: MSQNADKIVDHFNLFKQPDYQEMFKNKQKTFENRLPADQVARGQEWTKTWEYREKNFAREALSVNPDKACQPLGRIFARGFDGTRPFVHGSQGCVAYFRSHFNRHFKEPSSCVSSSMTEDPAVFGGLNNMIDGLAISYSLYKPKMIAVSTTCMAEVIGDDLNAFIKTAKEKGNVPESFDVPFAHTPSFVGSHITGYDNMMKGILTHFWDGKAGTVPALERKPDEKINFIGGFDGYTVGNMREIKRLFSLMNVDYTILGDGSDVWDTPADGEFRMYDGGTTFAEAEAALNAKATVCMQGISTEKTMAYIQEKGQEVVALHCPIGVTGTDHFLQEVSGISGKPISEELKKERGRLVDAIGTSISYLHGKKFAIKGDPDFCLGVAGFLLELGAEPVHVVCTRGNKDWAEKMNALFASSPFGTGCHAYPGKDLWHMRSLVFTEPVDFLIGNSYTKYLERDTGTPMIHIGFPIHDRHHHHRYPIWGYQGAVNVLVWILDRIHLELDRNTLGIGTTDFSYDLVR.

[8Fe-7S] cluster-binding residues include Cys70, Cys94, Cys152, and Ser187.

It belongs to the NifD/NifK/NifE/NifN family. Tetramer of two alpha and two beta chains. Forms complex with the iron protein (nitrogenase component 2). Requires [8Fe-7S] cluster as cofactor.

The catalysed reaction is N2 + 8 reduced [2Fe-2S]-[ferredoxin] + 16 ATP + 16 H2O = H2 + 8 oxidized [2Fe-2S]-[ferredoxin] + 2 NH4(+) + 16 ADP + 16 phosphate + 6 H(+). Its function is as follows. This molybdenum-iron protein is part of the nitrogenase complex that catalyzes the key enzymatic reactions in nitrogen fixation. The protein is Nitrogenase molybdenum-iron protein beta chain (nifK) of Acidithiobacillus ferridurans.